An 83-amino-acid chain; its full sequence is ATP synthase subunit 9, mitochondrial (83 aa).

2 consecutive transmembrane segments (helical) span residues 8–28 and 45–72; these read IGAG…GNVL and SFGY…LISS.

Belongs to the ATPase C chain family. F-type ATPases have 2 components, CF(1) - the catalytic core - and CF(0) - the membrane proton channel. CF(1) has five subunits: alpha(3), beta(3), gamma(1), delta(1), epsilon(1). CF(0) has three main subunits: a, b and c.

The protein localises to the mitochondrion membrane. This protein is one of the chains of the nonenzymatic membrane component (F0) of mitochondrial ATPase. The polypeptide is ATP synthase subunit 9, mitochondrial (ATP9) (Helianthus annuus (Common sunflower)).